Reading from the N-terminus, the 444-residue chain is tRNA (guanine-N(7)-)-methyltransferase non-catalytic subunit TRM82 (444 aa).

7 WD repeats span residues 1 to 47 (MSVI…WSDD), 48 to 99 (FDKI…LGAP), 100 to 147 (PIYS…KRFC), 148 to 192 (FSKR…EPIL), 193 to 237 (GHVS…DKWL), 238 to 279 (FGHK…STFD), and 308 to 354 (FAVS…ITFP). The interval 55 to 92 (RNTTAKEQQGQSSENENENKKLKSNKGDSIKRTAAKVP) is disordered. Positions 71–85 (NENKKLKSNKGDSIK) are enriched in basic and acidic residues. The residue at position 93 (S93) is a Phosphoserine.

Belongs to the WD repeat TRM82 family. In terms of assembly, forms a heterodimer with the catalytic subunit TRM8.

It localises to the nucleus. It functions in the pathway tRNA modification; N(7)-methylguanine-tRNA biosynthesis. Functionally, required for the formation of N(7)-methylguanine at position 46 (m7G46) in tRNA, a modification required to maintain stability of tRNAs; its absence resulting in tRNA decay. In the complex, it is required to stabilize and induce conformational changes of the catalytic subunit. In Saccharomyces cerevisiae (strain RM11-1a) (Baker's yeast), this protein is tRNA (guanine-N(7)-)-methyltransferase non-catalytic subunit TRM82.